The sequence spans 1323 residues: DNA-directed RNA polymerase subunit beta' (1323 aa).

Residues cysteine 60, cysteine 62, cysteine 75, and cysteine 78 each coordinate Zn(2+). Mg(2+)-binding residues include aspartate 535, aspartate 537, and aspartate 539. The Zn(2+) site is built by cysteine 894, cysteine 977, cysteine 984, and cysteine 987.

Belongs to the RNA polymerase beta' chain family. The RNAP catalytic core consists of 2 alpha, 1 beta, 1 beta' and 1 omega subunit. When a sigma factor is associated with the core the holoenzyme is formed, which can initiate transcription. The cofactor is Mg(2+). Requires Zn(2+) as cofactor.

It catalyses the reaction RNA(n) + a ribonucleoside 5'-triphosphate = RNA(n+1) + diphosphate. Its function is as follows. DNA-dependent RNA polymerase catalyzes the transcription of DNA into RNA using the four ribonucleoside triphosphates as substrates. This Corynebacterium jeikeium (strain K411) protein is DNA-directed RNA polymerase subunit beta'.